The sequence spans 60 residues: MARLKVTQVRSEIGTKRNQRDSLRSLGLKRINDVVVKEDRPEIRGMIFTVNHLVKVEEVE.

It belongs to the universal ribosomal protein uL30 family. Part of the 50S ribosomal subunit.

The polypeptide is Large ribosomal subunit protein uL30 (Salinispora arenicola (strain CNS-205)).